Here is a 210-residue protein sequence, read N- to C-terminus: uncharacterized protein (210 aa).

This is an uncharacterized protein from Escherichia coli (strain K12).